We begin with the raw amino-acid sequence, 480 residues long: MATAANQIGRVTQVIGAVVDVQFEGHLPAILNSLETKNGGNRLVLEVAQHLGESTVRAIAMDTTEGLVRGQEVTDTGAPIRVPVGEGTLGRIINVIGEPIDEAGPVKADNVRAIHQEAPTYTDQSTEAEILVTGIKVVDLLAPYAKGGKIGLFGGAGVGKTVLIQELINNVAKAHGGYSVFAGVGERTREGNDLYHEFIESKVNADPHNPDPSVKSKCALVFGQMNEPPGARARVALTGLTIAEDFRDKGQDVLFFVDNIFRFTQAGSEVSALLGRIPSAVGYQPTLATDMGALQERITTTTKGSITSVQAIYVPADDLTDPAPATSFAHLDATTTLSRSIAEKGIYPAVDPLDSTSRMLSPLVVGEEHYAVARQVQQVLQRYKALQDIIAILGMDELSEEDKLTVARARKVERFMSQPFHVAEIFTGSPGKFVELADTIKGFKGLVEGKYDHLPEAAFYMVGTIEEAVEKGKKLAAEAA.

154–161 contributes to the ATP binding site; it reads GGAGVGKT.

It belongs to the ATPase alpha/beta chains family. As to quaternary structure, F-type ATPases have 2 components, CF(1) - the catalytic core - and CF(0) - the membrane proton channel. CF(1) has five subunits: alpha(3), beta(3), gamma(1), delta(1), epsilon(1). CF(0) has four main subunits: a(1), b(1), b'(1) and c(9-12).

It is found in the cell inner membrane. The catalysed reaction is ATP + H2O + 4 H(+)(in) = ADP + phosphate + 5 H(+)(out). Produces ATP from ADP in the presence of a proton gradient across the membrane. The catalytic sites are hosted primarily by the beta subunits. The polypeptide is ATP synthase subunit beta (Bradyrhizobium sp. (strain ORS 278)).